A 304-amino-acid polypeptide reads, in one-letter code: Probable intron-encoded endonuclease 1 (304 aa).

The 92-residue stretch at Asp84–Phe175 folds into the GIY-YIG domain.

To endonucleases of group I introns of fungi and phage.

The protein localises to the mitochondrion. In terms of biological role, mitochondrial DNA endonuclease involved in intron homing. In Neurospora crassa (strain ATCC 24698 / 74-OR23-1A / CBS 708.71 / DSM 1257 / FGSC 987), this protein is Probable intron-encoded endonuclease 1.